Here is a 694-residue protein sequence, read N- to C-terminus: Elongation factor G (694 aa).

In terms of domain architecture, tr-type G spans 8–285 (EKVRNIGIAA…AVVELLPSPQ (278 aa)). GTP is bound by residues 17-24 (AHIDAGKT), 81-85 (DTPGH), and 135-138 (NKMD).

This sequence belongs to the TRAFAC class translation factor GTPase superfamily. Classic translation factor GTPase family. EF-G/EF-2 subfamily.

Its subcellular location is the cytoplasm. Its function is as follows. Catalyzes the GTP-dependent ribosomal translocation step during translation elongation. During this step, the ribosome changes from the pre-translocational (PRE) to the post-translocational (POST) state as the newly formed A-site-bound peptidyl-tRNA and P-site-bound deacylated tRNA move to the P and E sites, respectively. Catalyzes the coordinated movement of the two tRNA molecules, the mRNA and conformational changes in the ribosome. The sequence is that of Elongation factor G (fusA) from Synechococcus sp. (strain ATCC 27144 / PCC 6301 / SAUG 1402/1) (Anacystis nidulans).